Reading from the N-terminus, the 633-residue chain is Histone-lysine N-methyltransferase Su(var)3-9 (633 aa).

The region spanning 213–271 (YIVEKIESVEVVQFQPVFFVKWLGYDVSANTWESYVNLSDCAEMEKFVERHLQLHQHYI) is the Chromo domain. The Pre-SET domain occupies 407 to 472 (VGCMCRHQSG…SCTNRVVQNG (66 aa)). Zn(2+)-binding residues include Cys409, Cys411, Cys419, Cys425, Cys426, Cys454, Cys458, Cys460, and Cys464. An SET domain is found at 475–601 (HPLVLFKTSN…AGEELSFDYI (127 aa)). Residues 486-488 (SGW), Tyr529, and 558-559 (NH) each bind S-adenosyl-L-methionine. Residues Cys561, Cys621, Cys623, and Cys628 each contribute to the Zn(2+) site. In terms of domain architecture, Post-SET spans 617 to 633 (ARVQCRCGAANCRKVLF).

Belongs to the class V-like SAM-binding methyltransferase superfamily. Histone-lysine methyltransferase family. Suvar3-9 subfamily. As to quaternary structure, interacts with Su(var)205 and Su(var)3-7. Probably associates with HDAC1/Rpd3.

It localises to the nucleus. The protein resides in the chromosome. The protein localises to the centromere. The enzyme catalyses L-lysyl(9)-[histone H3] + 3 S-adenosyl-L-methionine = N(6),N(6),N(6)-trimethyl-L-lysyl(9)-[histone H3] + 3 S-adenosyl-L-homocysteine + 3 H(+). In terms of biological role, histone methyltransferase that specifically trimethylates 'Lys-9' of histone H3 using monomethylated H3 'Lys-9' as substrate. H3 'Lys-9' trimethylation represents a specific tag for epigenetic transcriptional repression by recruiting Su(var)205/HP1 to methylated histones. Mainly functions in heterochromatin regions, thereby playing a central role in the establishment of constitutive heterochromatin at pericentric regions. Involved in heterochromatic gene silencing including the modification of position-effect-variegation. The protein is Histone-lysine N-methyltransferase Su(var)3-9 (Su(var)3-9) of Drosophila pseudoobscura pseudoobscura (Fruit fly).